A 579-amino-acid chain; its full sequence is Capsid vertex component 2 (579 aa).

The interval 1–46 is interaction with major capsid protein/MCP; sequence MSRFMHFYKSPVPLVLQAHKKNCLVYTNLRTRRLRLLAQLNQREKE. Residues 92-134 are disordered; it reads RPNEQVSSSTTTGHNNTTGTPTQSVVSGTGAVTGTGGTSSVAP. Over residues 101–121 the composition is skewed to low complexity; sequence TTTGHNNTTGTPTQSVVSGTG.

The protein belongs to the herpesviridae CVC2 protein family. Heterodimerizes with CVC1. Interacts with major capsid protein/MCP and triplex capsid protein 1/TRX1 at the pentamer vertices. Interacts with the large tegument protein/LTP.

It is found in the virion. It localises to the host nucleus. Functionally, capsid vertex-specific component that plays a role during viral DNA encapsidation, assuring correct genome cleavage and presumably stabilizing capsids that contain full-length viral genomes. Participates in the interaction between the capsid and the tegument through interaction with the large tegument protein/LTP. The chain is Capsid vertex component 2 from Elephantid herpesvirus 1 (isolate Asian elephant/Berlin/Kiba/1998) (EIHV-1).